Here is a 278-residue protein sequence, read N- to C-terminus: MEPRAGDGCFLGDVGFWVERTPVHEAAQRGESLQLQQLIDSGACVNQVTVDSITPLHAASLQGQAQCVQLLLAAGAQVDARNIDGSTPLCDACASGSIECVKLLLSYGAKVNPPLYTASPLHEACMSGSSECVRLLIDVGANLEAHDCHFGTPLHVACAREHLDCVKVLLNAGANVNAAKLHETALHHAAKVKNVDLIEMLIEFGGNIYARDNRGKKPSDYTWSSSAPAKCFEYYEKTPLSLSQLCRVSLRKATGVRGLEKVAKLNIPPRLIDYLSYN.

6 ANK repeats span residues 18–47 (VERTPVHEAAQRGESLQLQQLIDSGACVNQ), 51–80 (DSITPLHAASLQGQAQCVQLLLAAGAQVDA), 84–113 (DGSTPLCDACASGSIECVKLLLSYGAKVNP), 116–145 (YTASPLHEACMSGSSECVRLLIDVGANLEA), 149–178 (HFGTPLHVACAREHLDCVKVLLNAGANVNA), and 181–210 (LHETALHHAAKVKNVDLIEMLIEFGGNIYA). The region spanning 229–278 (AKCFEYYEKTPLSLSQLCRVSLRKATGVRGLEKVAKLNIPPRLIDYLSYN) is the SOCS box domain.

Belongs to the ankyrin SOCS box (ASB) family.

The protein operates within protein modification; protein ubiquitination. Functionally, may be a substrate-recognition component of a SCF-like ECS (Elongin-Cullin-SOCS-box protein) E3 ubiquitin-protein ligase complex which mediates the ubiquitination and subsequent proteasomal degradation of target proteins. The chain is Ankyrin repeat and SOCS box protein 13 (Asb13) from Mus musculus (Mouse).